The following is a 224-amino-acid chain: Large ribosomal subunit protein uL4 (224 aa).

The tract at residues 52 to 109 (AAARQGTHSTKTRGDVSGGGRKPYRQKGTGRARQGSTRAPQFTGGGVVHGPKPRDYSQ) is disordered.

This sequence belongs to the universal ribosomal protein uL4 family. As to quaternary structure, part of the 50S ribosomal subunit.

Its function is as follows. One of the primary rRNA binding proteins, this protein initially binds near the 5'-end of the 23S rRNA. It is important during the early stages of 50S assembly. It makes multiple contacts with different domains of the 23S rRNA in the assembled 50S subunit and ribosome. Functionally, forms part of the polypeptide exit tunnel. The sequence is that of Large ribosomal subunit protein uL4 from Mycobacterium marinum (strain ATCC BAA-535 / M).